A 321-amino-acid chain; its full sequence is Homoserine O-succinyltransferase (321 aa).

Cysteine 142 functions as the Acyl-thioester intermediate in the catalytic mechanism. Substrate is bound by residues lysine 163 and serine 192. Histidine 235 acts as the Proton acceptor in catalysis. Residue glutamate 237 is part of the active site. Arginine 249 serves as a coordination point for substrate.

The protein belongs to the MetA family.

It localises to the cytoplasm. The enzyme catalyses L-homoserine + succinyl-CoA = O-succinyl-L-homoserine + CoA. The protein operates within amino-acid biosynthesis; L-methionine biosynthesis via de novo pathway; O-succinyl-L-homoserine from L-homoserine: step 1/1. Transfers a succinyl group from succinyl-CoA to L-homoserine, forming succinyl-L-homoserine. The chain is Homoserine O-succinyltransferase from Shewanella loihica (strain ATCC BAA-1088 / PV-4).